Reading from the N-terminus, the 315-residue chain is Tetraacyldisaccharide 4'-kinase (315 aa).

52–59 (TVGGTGKT) contributes to the ATP binding site.

It belongs to the LpxK family.

The enzyme catalyses a lipid A disaccharide + ATP = a lipid IVA + ADP + H(+). It functions in the pathway glycolipid biosynthesis; lipid IV(A) biosynthesis; lipid IV(A) from (3R)-3-hydroxytetradecanoyl-[acyl-carrier-protein] and UDP-N-acetyl-alpha-D-glucosamine: step 6/6. Transfers the gamma-phosphate of ATP to the 4'-position of a tetraacyldisaccharide 1-phosphate intermediate (termed DS-1-P) to form tetraacyldisaccharide 1,4'-bis-phosphate (lipid IVA). The polypeptide is Tetraacyldisaccharide 4'-kinase (Ruthia magnifica subsp. Calyptogena magnifica).